The following is a 333-amino-acid chain: Transcription factor MYB94 (333 aa).

HTH myb-type domains follow at residues 9–65 (KIGV…RPGI) and 66–116 (KRGN…KKKL). 2 consecutive DNA-binding regions (H-T-H motif) follow at residues 37-61 (WRSV…TNYL) and 89-112 (WAAI…NTHL). Polar residues predominate over residues 134–154 (KDFSISNKNTTSHQSSNSSKG). Disordered stretches follow at residues 134-157 (KDFS…GQWE) and 183-218 (PTNF…YPSG). Residues 196–209 (SSSSSSTTTTTTTT) show a composition bias toward low complexity.

As to expression, expressed in germinating seeds, rosette and cauline leaves, flower buds, open flowers, stems and developing siliques.

It is found in the nucleus. Functionally, transcription activator involved in the activation of cuticular wax biosynthesis under drought stress. Binds directly to the promoters of genes involved in cuticular wax biosynthesis. Transactivates WSD1, KCS2/DAISY, CER1, CER2, FAR3 and ECR genes. Functions together with MYB96 in the activation of cuticular wax biosynthesis. The chain is Transcription factor MYB94 from Arabidopsis thaliana (Mouse-ear cress).